The sequence spans 201 residues: Large ribosomal subunit protein uL4 (201 aa).

The interval 42 to 67 is disordered; the sequence is GNSAQKTRSEVSGGGKKPWNQKGTGR.

It belongs to the universal ribosomal protein uL4 family. In terms of assembly, part of the 50S ribosomal subunit.

Functionally, one of the primary rRNA binding proteins, this protein initially binds near the 5'-end of the 23S rRNA. It is important during the early stages of 50S assembly. It makes multiple contacts with different domains of the 23S rRNA in the assembled 50S subunit and ribosome. In terms of biological role, forms part of the polypeptide exit tunnel. This is Large ribosomal subunit protein uL4 from Legionella pneumophila (strain Corby).